We begin with the raw amino-acid sequence, 177 residues long: Small ribosomal subunit protein uS5 (177 aa).

Residues 19 to 82 form the S5 DRBM domain; the sequence is FIEKLVAIKR…DQAQKQMIKV (64 aa).

The protein belongs to the universal ribosomal protein uS5 family. Part of the 30S ribosomal subunit. Contacts proteins S4 and S8.

Functionally, with S4 and S12 plays an important role in translational accuracy. Its function is as follows. Located at the back of the 30S subunit body where it stabilizes the conformation of the head with respect to the body. The polypeptide is Small ribosomal subunit protein uS5 (Magnetococcus marinus (strain ATCC BAA-1437 / JCM 17883 / MC-1)).